Consider the following 351-residue polypeptide: Uroporphyrinogen decarboxylase (351 aa).

Substrate contacts are provided by residues 25 to 29, phenylalanine 43, aspartate 74, tyrosine 151, serine 206, and histidine 325; that span reads RQAGR.

This sequence belongs to the uroporphyrinogen decarboxylase family. In terms of assembly, homodimer.

It localises to the cytoplasm. It catalyses the reaction uroporphyrinogen III + 4 H(+) = coproporphyrinogen III + 4 CO2. The protein operates within porphyrin-containing compound metabolism; protoporphyrin-IX biosynthesis; coproporphyrinogen-III from 5-aminolevulinate: step 4/4. Catalyzes the decarboxylation of four acetate groups of uroporphyrinogen-III to yield coproporphyrinogen-III. This Chlorobaculum tepidum (strain ATCC 49652 / DSM 12025 / NBRC 103806 / TLS) (Chlorobium tepidum) protein is Uroporphyrinogen decarboxylase.